We begin with the raw amino-acid sequence, 205 residues long: Recombination protein RecR (205 aa).

The segment at Cys58 to Cys75 adopts a C4-type zinc-finger fold. One can recognise a Toprim domain in the interval Ser83 to Pro182.

It belongs to the RecR family.

Its function is as follows. May play a role in DNA repair. It seems to be involved in an RecBC-independent recombinational process of DNA repair. It may act with RecF and RecO. In Chlorobium limicola (strain DSM 245 / NBRC 103803 / 6330), this protein is Recombination protein RecR.